Consider the following 512-residue polypeptide: Tyrosine-protein kinase Lyn (512 aa).

The disordered stretch occupies residues 1–45 (MGCIKSKRKDNLNDDEVDSKTQPVRNTDRTIYVRDPTSNKQQRPV). Glycine 2 carries N-myristoyl glycine lipidation. Cysteine 3 carries S-palmitoyl cysteine lipidation. At serine 19 the chain carries Phosphoserine. The SH3 domain occupies 63-123 (EQGDIVVALY…PSNYVAKVNT (61 aa)). In terms of domain architecture, SH2 spans 129 to 226 (WFFKDITRKD…GLCRRLEKAC (98 aa)). At tyrosine 193 the chain carries Phosphotyrosine. At serine 228 the chain carries Phosphoserine. The 255-residue stretch at 247–501 (IKLVKKLGAG…YLQSVLDDFY (255 aa)) folds into the Protein kinase domain. ATP contacts are provided by residues 253–261 (LGAGQFGEV) and lysine 275. Residues tyrosine 306 and tyrosine 316 each carry the phosphotyrosine modification. The Proton acceptor role is filled by aspartate 367. Tyrosine 397 carries the post-translational modification Phosphotyrosine; by autocatalysis. 2 positions are modified to phosphotyrosine: tyrosine 460 and tyrosine 473. At tyrosine 508 the chain carries Phosphotyrosine; by autocatalysis, CSK and MATK.

The protein belongs to the protein kinase superfamily. Tyr protein kinase family. SRC subfamily. Interacts with TEC. Interacts (via SH2 domain) with FLT3 (tyrosine phosphorylated). Interacts with LIME1 and with CD79A upon activation of the B-cell antigen receptor. Interacts with the B-cell receptor complex. Interacts with phosphorylated THEMIS2. Interacts with EPOR. Interacts with MS4A2/FCER1B. Interaction (via the SH2 and SH3 domains) with MUC1 is stimulated by IL7 and the subsequent phosphorylation increases the binding between MUC1 and CTNNB1/beta-catenin. Interacts with ADAM15. Interacts with NDFIP2 and more weakly with NDFIP1. Interacts with FASLG. Interacts with KIT. Interacts with HCLS1. Interacts with FCGR2B. Interacts with FCGR1A; the interaction may be indirect. Interacts with CD19, CD22, CD79A and CD79B. Interacts (via SH3 domain) with CBLC, PPP1R15A and PDE4A. Interacts with TGFB1I1. Interacts (via SH3 domain) with PIK3R1, the regulatory subunit of phosphatidylinositol 3-kinase; this interaction enhances phosphatidylinositol 3-kinase activity. Interacts with CSF2RB, the common subunit of the IL3, IL5 and CSF2 receptors. Interacts with PAG1; identified in a complex with PAG1 and STAT3. Interacts with ABL1. Interacts with PTPN6/SHP-1. Interacts (via SH3 domain) with SCIMP (via proline-rich region). This interaction facilitates the phosphorylation of SCIMP on 'Tyr-96', which enhances binding of SCIMP to TLR4, and consequently the phosphorylation of TLR4 in response to stimulation by lipopolysaccharide in macrophages. Interacts with LPXN (via LD motif 3) and the interaction is induced upon B-cell antigen receptor (BCR) activation. Interacts (via SH3-domain) with ANKRD54 (via ankyrin repeat region) in an activation-independent status of LYN. Forms a multiprotein complex with ANKRD54 and HCLS1. Interacts (via SH2 and SH3 domains) with UNC119; leading to LYN activation. Interacts with CD36. Interacts with LYN. Interacts with SKAP1 and FYB1; this interaction promotes the phosphorylation of CLNK. Interacts with BCAR1/CAS and NEDD9/HEF1. Post-translationally, ubiquitinated by CBL, leading to its degradation. Autophosphorylated. Phosphorylated on tyrosine residues in response to KIT signaling. Phosphorylation at Tyr-397 is required for optimal activity. Phosphorylation at Tyr-508 inhibits kinase activity. Phosphorylated at Tyr-508 by CSK. Dephosphorylated by PTPRC/CD45. Becomes rapidly phosphorylated upon activation of the B-cell receptor and the immunoglobulin receptor FCGR1A. Phosphorylated in response to ITGB1 in B-cells. As to expression, detected in bone marrow-derived monocytes and macrophages (at protein level). Expressed predominantly in B-lymphoid and myeloid cells.

The protein localises to the cell membrane. It localises to the nucleus. The protein resides in the cytoplasm. Its subcellular location is the perinuclear region. It is found in the golgi apparatus. The protein localises to the membrane. It carries out the reaction L-tyrosyl-[protein] + ATP = O-phospho-L-tyrosyl-[protein] + ADP + H(+). Its activity is regulated as follows. Subject to autoinhibition, mediated by intramolecular interactions between the SH2 domain and the C-terminal phosphotyrosine. Phosphorylation at Tyr-397 is required for optimal activity. Phosphorylated by CSK at Tyr-508; phosphorylation at Tyr-508 inhibits kinase activity. Kinase activity is modulated by dephosphorylation by PTPRC/CD45. Inhibited by dasatinib, PP2, and SU6656. Its function is as follows. Non-receptor tyrosine-protein kinase that transmits signals from cell surface receptors and plays an important role in the regulation of innate and adaptive immune responses, hematopoiesis, responses to growth factors and cytokines, integrin signaling, but also responses to DNA damage and genotoxic agents. Functions primarily as negative regulator, but can also function as activator, depending on the context. Required for the initiation of the B-cell response, but also for its down-regulation and termination. Plays an important role in the regulation of B-cell differentiation, proliferation, survival and apoptosis, and is important for immune self-tolerance. Acts downstream of several immune receptors, including the B-cell receptor, CD79A, CD79B, CD5, CD19, CD22, FCER1, FCGR2, FCGR1A, TLR2 and TLR4. Plays a role in the inflammatory response to bacterial lipopolysaccharide. Mediates the responses to cytokines and growth factors in hematopoietic progenitors, platelets, erythrocytes, and in mature myeloid cells, such as dendritic cells, neutrophils and eosinophils. Acts downstream of EPOR, KIT, MPL, the chemokine receptor CXCR4, as well as the receptors for IL3, IL5 and CSF2. Plays an important role in integrin signaling. Regulates cell proliferation, survival, differentiation, migration, adhesion, degranulation, and cytokine release. Involved in the regulation of endothelial activation, neutrophil adhesion and transendothelial migration. Down-regulates signaling pathways by phosphorylation of immunoreceptor tyrosine-based inhibitory motifs (ITIM), that then serve as binding sites for phosphatases, such as PTPN6/SHP-1, PTPN11/SHP-2 and INPP5D/SHIP-1, that modulate signaling by dephosphorylation of kinases and their substrates. Phosphorylates LIME1 in response to CD22 activation. Phosphorylates BTK, CBL, CD5, CD19, CD72, CD79A, CD79B, CSF2RB, DOK1, HCLS1, MS4A2/FCER1B, SYK and TEC. Phosphorylates PIRB at Tyr-794 and Tyr-824, which is required for PIRB interaction with PTPN6/SHP-1 and PTPN11/SHP-2. Promotes phosphorylation of SIRPA, PTPN6/SHP-1, PTPN11/SHP-2 and INPP5D/SHIP-1. Required for rapid phosphorylation of FER in response to FCER1 activation. Mediates KIT phosphorylation. Acts as an effector of EPOR (erythropoietin receptor) in controlling KIT expression and may play a role in erythroid differentiation during the switch between proliferation and maturation. Depending on the context, activates or inhibits several signaling cascades. Regulates phosphatidylinositol 3-kinase activity and AKT1 activation. Regulates activation of the MAP kinase signaling cascade, including activation of MAP2K1/MEK1, MAPK1/ERK2, MAPK3/ERK1, MAPK8/JNK1 and MAPK9/JNK2. Mediates activation of STAT5A and/or STAT5B. Phosphorylates LPXN on 'Tyr-72'. Kinase activity facilitates TLR4-TLR6 heterodimerization and signal initiation. Phosphorylates SCIMP on 'Tyr-96'; this enhances binding of SCIMP to TLR4, promoting the phosphorylation of TLR4, and a selective cytokine response to lipopolysaccharide in macrophages. Phosphorylates CLNK. Phosphorylates BCAR1/CAS and NEDD9/HEF1. The sequence is that of Tyrosine-protein kinase Lyn (Lyn) from Mus musculus (Mouse).